A 78-amino-acid chain; its full sequence is Large ribosomal subunit protein bL28 (78 aa).

This sequence belongs to the bacterial ribosomal protein bL28 family.

This is Large ribosomal subunit protein bL28 from Gloeothece citriformis (strain PCC 7424) (Cyanothece sp. (strain PCC 7424)).